The sequence spans 260 residues: Proteasome subunit alpha (260 aa).

This sequence belongs to the peptidase T1A family. The 20S proteasome core is composed of 14 alpha and 14 beta subunits that assemble into four stacked heptameric rings, resulting in a barrel-shaped structure. The two inner rings, each composed of seven catalytic beta subunits, are sandwiched by two outer rings, each composed of seven alpha subunits. The catalytic chamber with the active sites is on the inside of the barrel. Has a gated structure, the ends of the cylinder being occluded by the N-termini of the alpha-subunits. Is capped at one or both ends by the proteasome regulatory ATPase, PAN.

It localises to the cytoplasm. The formation of the proteasomal ATPase PAN-20S proteasome complex, via the docking of the C-termini of PAN into the intersubunit pockets in the alpha-rings, triggers opening of the gate for substrate entry. Interconversion between the open-gate and close-gate conformations leads to a dynamic regulation of the 20S proteasome proteolysis activity. Component of the proteasome core, a large protease complex with broad specificity involved in protein degradation. This is Proteasome subunit alpha from Thermococcus gammatolerans (strain DSM 15229 / JCM 11827 / EJ3).